Here is an 88-residue protein sequence, read N- to C-terminus: Putative membrane protein insertion efficiency factor (88 aa).

Residues 68–88 are disordered; the sequence is VPPKKDKNADSEHSCKVHHHH. Basic and acidic residues predominate over residues 69 to 82; the sequence is PPKKDKNADSEHSC.

It belongs to the UPF0161 family.

The protein resides in the cell membrane. Could be involved in insertion of integral membrane proteins into the membrane. The chain is Putative membrane protein insertion efficiency factor from Listeria monocytogenes serovar 1/2a (strain ATCC BAA-679 / EGD-e).